Reading from the N-terminus, the 2241-residue chain is Large tegument protein deneddylase (2241 aa).

The interval 1-238 is deubiquitination activity; the sequence is MKVTQASCHQ…IDLTGVVRES (238 aa). Residues 4–226 enclose the Peptidase C76 domain; that stretch reads TQASCHQGDI…AARLVSTYRD (223 aa). Residues Cys24, Asp160, and His162 contribute to the active site. The tract at residues 239–314 is disordered; the sequence is ADTAATTTTA…STTSKTLATA (76 aa). A compositionally biased stretch (low complexity) spans 240–250; it reads DTAATTTTAAP. A compositionally biased stretch (pro residues) spans 251–268; it reads SLPPLPDPIVDPGCPPGV. Residues 304-314 show a composition bias toward low complexity; that stretch reads PSTTSKTLATA. An interaction with inner tegument protein region spans residues 327–331; the sequence is SSAVP. 2 disordered regions span residues 1187–1230 and 2118–2152; these read MTET…PPAD and PIARVQQPPRRHRHRAAAAADDDGQIDHAQDDTSR. Basic and acidic residues-rich tracts occupy residues 1190–1199 and 2142–2152; these read TSERLDRSLR and QIDHAQDDTSR.

The protein belongs to the herpesviridae large tegument protein family. Interacts with host CUL1 and CUL4A; these interactions inhibit the E3 ligase activity of cullins. Interacts with inner tegument protein. Interacts with capsid vertex specific component CVC2. Interacts with the major capsid protein/MCP.

The protein localises to the virion tegument. It is found in the host cytoplasm. The protein resides in the host nucleus. It carries out the reaction Thiol-dependent hydrolysis of ester, thioester, amide, peptide and isopeptide bonds formed by the C-terminal Gly of ubiquitin (a 76-residue protein attached to proteins as an intracellular targeting signal).. In terms of biological role, large tegument protein that plays multiple roles in the viral cycle. During viral entry, remains associated with the capsid while most of the tegument is detached and participates in the capsid transport toward the host nucleus. Plays a role in the routing of the capsid at the nuclear pore complex and subsequent uncoating. Within the host nucleus, acts as a deneddylase and promotes the degradation of nuclear CRLs (cullin-RING ubiquitin ligases) and thereby stabilizes nuclear CRL substrates, while cytoplasmic CRLs remain unaffected. These modifications prevent host cell cycle S-phase progression and create a favorable environment allowing efficient viral genome replication. Participates later in the secondary envelopment of capsids. Indeed, plays a linker role for the association of the outer viral tegument to the capsids together with the inner tegument protein. The chain is Large tegument protein deneddylase (UL48) from Homo sapiens (Human).